We begin with the raw amino-acid sequence, 418 residues long: Actin-related protein 3 (418 aa).

Ala-2 carries the N-acetylalanine modification.

Belongs to the actin family. ARP3 subfamily. In terms of assembly, component of the Arp2/3 complex composed of ACTR2/ARP2, ACTR3/ARP3, ARPC1B/p41-ARC, ARPC2/p34-ARC, ARPC3/p21-ARC, ARPC4/p20-ARC and ARPC5/p16-ARC. As to expression, detected in fibroblasts.

It localises to the cytoplasm. The protein localises to the cytoskeleton. The protein resides in the cell projection. It is found in the nucleus. Its function is as follows. ATP-binding component of the Arp2/3 complex, a multiprotein complex that mediates actin polymerization upon stimulation by nucleation-promoting factor (NPF). The Arp2/3 complex mediates the formation of branched actin networks in the cytoplasm, providing the force for cell motility. Seems to contact the pointed end of the daughter actin filament. In addition to its role in the cytoplasmic cytoskeleton, the Arp2/3 complex also promotes actin polymerization in the nucleus, thereby regulating gene transcription and repair of damaged DNA. The Arp2/3 complex promotes homologous recombination (HR) repair in response to DNA damage by promoting nuclear actin polymerization, leading to drive motility of double-strand breaks (DSBs). The chain is Actin-related protein 3 (ACTR3) from Gallus gallus (Chicken).